A 775-amino-acid chain; its full sequence is Serine/threonine-protein kinase ppk6 (775 aa).

2 positions are modified to phosphoserine: Ser132 and Ser134. The region spanning 503–758 (YTTIKELGIG…IEETLQHHWF (256 aa)) is the Protein kinase domain. ATP-binding positions include 509–517 (LGIGAYGQV) and Lys533. Asp636 serves as the catalytic Proton acceptor.

It belongs to the protein kinase superfamily. Ser/Thr protein kinase family.

It is found in the cytoplasm. The protein resides in the nucleus. It carries out the reaction L-seryl-[protein] + ATP = O-phospho-L-seryl-[protein] + ADP + H(+). It catalyses the reaction L-threonyl-[protein] + ATP = O-phospho-L-threonyl-[protein] + ADP + H(+). This Schizosaccharomyces pombe (strain 972 / ATCC 24843) (Fission yeast) protein is Serine/threonine-protein kinase ppk6 (ppk6).